The following is a 78-amino-acid chain: Large ribosomal subunit protein uL29 (78 aa).

The protein belongs to the universal ribosomal protein uL29 family.

The protein is Large ribosomal subunit protein uL29 of Rhodococcus erythropolis (strain PR4 / NBRC 100887).